The chain runs to 348 residues: Dihydroorotate dehydrogenase (quinone) (348 aa).

Residues 60-64 (AGLDK) and T84 each bind FMN. K64 provides a ligand contact to substrate. A substrate-binding site is contributed by 109–113 (NRMGF). FMN-binding residues include N137 and N170. Position 170 (N170) interacts with substrate. The Nucleophile role is filled by S173. N175 serves as a coordination point for substrate. Residues K215 and T243 each contribute to the FMN site. 244 to 245 (NT) is a substrate binding site. Residues G266, G295, and 316–317 (YS) contribute to the FMN site.

This sequence belongs to the dihydroorotate dehydrogenase family. Type 2 subfamily. In terms of assembly, monomer. The cofactor is FMN.

Its subcellular location is the cell membrane. The enzyme catalyses (S)-dihydroorotate + a quinone = orotate + a quinol. The protein operates within pyrimidine metabolism; UMP biosynthesis via de novo pathway; orotate from (S)-dihydroorotate (quinone route): step 1/1. In terms of biological role, catalyzes the conversion of dihydroorotate to orotate with quinone as electron acceptor. In Nitrosospira multiformis (strain ATCC 25196 / NCIMB 11849 / C 71), this protein is Dihydroorotate dehydrogenase (quinone).